Consider the following 176-residue polypeptide: Inner membrane-spanning protein YciB (176 aa).

6 consecutive transmembrane segments (helical) span residues 3–23 (FLFD…WGIF), 24–44 (TATA…AFRH), 49–69 (TMLW…LVLH), 81–101 (LYWL…NNLI), 121–141 (VAWA…VHNF), and 149–169 (FKLF…SLWL).

This sequence belongs to the YciB family.

The protein localises to the cell inner membrane. Plays a role in cell envelope biogenesis, maintenance of cell envelope integrity and membrane homeostasis. This chain is Inner membrane-spanning protein YciB, found in Burkholderia lata (strain ATCC 17760 / DSM 23089 / LMG 22485 / NCIMB 9086 / R18194 / 383).